The following is a 159-amino-acid chain: Fimbrial protein EcpB (159 aa).

A propeptide spans 1 to 6 (leader sequence); it reads MYKQKG. Position 7 is an N-methylphenylalanine (F7). A helical membrane pass occupies residues 7 to 29; sequence FTLIELMIVIAIIGILAAIALPL. A disulfide bond links C137 and C156.

It belongs to the N-Me-Phe pilin family.

It is found in the fimbrium. It localises to the membrane. The chain is Fimbrial protein EcpB (ecpB) from Eikenella corrodens.